The sequence spans 531 residues: Dimethylnonatriene synthase (531 aa).

A helical transmembrane segment spans residues 6 to 26; it reads TMSVAMALAAAIFVVLCSVVA. Cys464 contacts heme.

Belongs to the cytochrome P450 family. The cofactor is heme.

The protein localises to the membrane. The enzyme catalyses (6E,10E)-geranyllinalool + reduced [NADPH--hemoprotein reductase] + O2 = (3E,7E)-4,8,12-trimethyltrideca 1,3,7,11-tetraene + but-3-en-2-one + oxidized [NADPH--hemoprotein reductase] + 2 H2O + H(+). It catalyses the reaction (3S,6E)-nerolidol + reduced [NADPH--hemoprotein reductase] + O2 = (3E)-4,8-dimethylnona-1,3,7-triene + but-3-en-2-one + oxidized [NADPH--hemoprotein reductase] + 2 H2O + H(+). Its pathway is secondary metabolite biosynthesis; terpenoid biosynthesis. Its function is as follows. Involved in the biosynthesis of homoterpenes, attractants of herbivores parasitoids and predators (e.g. predatory mites and parasitoid wasps). Component of the volatile terpenes biosynthesis pathways. Converts mainly nerolidol to dimethylnonatriene (DMNT) and, to a lower extent, geranyllinalool to trimethyltridecatetraene (TMTT). The sequence is that of Dimethylnonatriene synthase from Zea mays (Maize).